We begin with the raw amino-acid sequence, 495 residues long: Glycerol kinase (495 aa).

Thr11 provides a ligand contact to ADP. Residues Thr11, Thr12, and Ser13 each contribute to the ATP site. A sn-glycerol 3-phosphate-binding site is contributed by Thr11. Arg15 provides a ligand contact to ADP. Residues Arg81, Glu82, Tyr133, and Asp242 each contribute to the sn-glycerol 3-phosphate site. Glycerol contacts are provided by Arg81, Glu82, Tyr133, Asp242, and Gln243. ADP contacts are provided by Thr264 and Gly307. ATP is bound by residues Thr264, Gly307, Gln311, and Gly408. Gly408 and Asn412 together coordinate ADP.

It belongs to the FGGY kinase family.

It carries out the reaction glycerol + ATP = sn-glycerol 3-phosphate + ADP + H(+). It functions in the pathway polyol metabolism; glycerol degradation via glycerol kinase pathway; sn-glycerol 3-phosphate from glycerol: step 1/1. Inhibited by fructose 1,6-bisphosphate (FBP). Functionally, key enzyme in the regulation of glycerol uptake and metabolism. Catalyzes the phosphorylation of glycerol to yield sn-glycerol 3-phosphate. The sequence is that of Glycerol kinase from Alkalilimnicola ehrlichii (strain ATCC BAA-1101 / DSM 17681 / MLHE-1).